Reading from the N-terminus, the 897-residue chain is MEANHCSLGVYPSYPDLVIDVGEVTLGEENRKKLQKTQRDQERARVIRAACALLNSGGGVIQMEMANRDERPTEMGLDLEESLRKLIQYPYLQAFFETKQHGRCFYIFVKSWSGDPFLKDGSFNSRICSLSSSLYCRSGTSVLHMNSRQAFDFLKTKERQSKYNLINEGSPPSKIMKAVYQNISESNPAYEVFQTDTIEYGEILSFPESPSIEFKQFSTKHIQQYVENIIPEYISAFANTEGGYLFIGVDDKSRKVLGCAKEQVDPDSLKNVIARAISKLPIVHFCSSKPRVEYSTKIVEVFCGKELYGYLCVIKVKAFCCVVFSEAPKSWMVREKYIRPLTTEEWVEKMMDADPEFPPDFAEAFESQLSLSDSPSLCRPVYSKKGLEHKADLQQHLFPVPPGHLECTPESLWKELSLQHEGLKELIHKQMRPFSQGIVILSRSWAVDLNLQEKPGVICDALLIAQNSTPILYTILREQDAEGQDYCTRTAFTLKQKLVNMGGYTGKVCVRAKVLCLSPESSAEALEAAVSPMDYPASYSLAGTQHMEALLQSLVIVLLGFRSLLSDQLGCEVLNLLTAQQYEIFSRSLRKNRELFVHGLPGSGKTIMAMKIMEKIRNVFHCEAHRILYVCENQPLRNFISDRNICRAETRETFLREKFEHIQHIVIDEAQNFRTEDGDWYRKAKTITQREKDCPGVLWIFLDYFQTSHLGHSGLPPLSAQYPREELTRVVRNADEIAEYIQQEMQLIIENPPINIPHGYLAILSEAKWVPGVPGNTKIIKNFTLEQIVTYVADTCRCFFERGYSPKDVAVLVSTVTEVEQYQSKLLKAMRKKMVVQLSDACDMLGVHIVLDSVRRFSGLERSIVFGIHPRTADPAILPNILICLASRAKQHLYIFL.

A n'-domain region region spans residues 2–355 (EANHCSLGVY…WVEKMMDADP (354 aa)). Catalysis depends on residues E208 and E213. The Zn(2+) site is built by H284, C286, and C321. 599 to 606 (GLPGSGKT) is a binding site for ATP.

The protein belongs to the Schlafen family. Subgroup III subfamily. Requires Mg(2+) as cofactor.

The protein localises to the cytoplasm. Endoribonuclease that cleaves tRNAs and rRNAs. Cleaves tRNAs 11 nucleotides from the 3'-terminus at the acceptor stem. Does not act on tRNA(Sec). Able to restrict HIV-1 virus replication; ability to inhibit HIV-1 replication is dependent on endoribonuclease activity. The sequence is that of Schlafen family member 13 from Homo sapiens (Human).